Reading from the N-terminus, the 125-residue chain is Small ribosomal subunit protein bS6 (125 aa).

Residues threonine 97 to glutamate 125 form a disordered region. Over residues alanine 104–alanine 113 the composition is skewed to basic and acidic residues. The span at glutamate 116 to glutamate 125 shows a compositional bias: acidic residues.

This sequence belongs to the bacterial ribosomal protein bS6 family.

In terms of biological role, binds together with bS18 to 16S ribosomal RNA. This Haemophilus influenzae (strain PittEE) protein is Small ribosomal subunit protein bS6.